The chain runs to 177 residues: Large ribosomal subunit protein uL5 (177 aa).

This sequence belongs to the universal ribosomal protein uL5 family. In terms of assembly, part of the 50S ribosomal subunit; part of the 5S rRNA/L5/L18/L25 subcomplex. Contacts the 5S rRNA and the P site tRNA. Forms a bridge to the 30S subunit in the 70S ribosome.

Functionally, this is one of the proteins that bind and probably mediate the attachment of the 5S RNA into the large ribosomal subunit, where it forms part of the central protuberance. In the 70S ribosome it contacts protein S13 of the 30S subunit (bridge B1b), connecting the 2 subunits; this bridge is implicated in subunit movement. Contacts the P site tRNA; the 5S rRNA and some of its associated proteins might help stabilize positioning of ribosome-bound tRNAs. The polypeptide is Large ribosomal subunit protein uL5 (Ehrlichia ruminantium (strain Welgevonden)).